We begin with the raw amino-acid sequence, 190 residues long: B3 domain-containing protein At1g49475 (190 aa).

Residues 1 to 27 (MRNMHTNRRSPGPITSAATQRRLKPEP) form a disordered region. A DNA-binding region (TF-B3) is located at residues 33–125 (KFIKIILLSR…CFRVVIFDVS (93 aa)).

The protein localises to the nucleus. This is B3 domain-containing protein At1g49475 from Arabidopsis thaliana (Mouse-ear cress).